We begin with the raw amino-acid sequence, 64 residues long: Small, acid-soluble spore protein beta (64 aa).

It belongs to the alpha/beta-type SASP family.

In terms of biological role, SASP are bound to spore DNA. They are double-stranded DNA-binding proteins that cause DNA to change to an a-like conformation. They protect the DNA backbone from chemical and enzymatic cleavage and are thus involved in dormant spore's high resistance to UV light. The polypeptide is Small, acid-soluble spore protein beta (Paraclostridium bifermentans (Clostridium bifermentans)).